A 342-amino-acid polypeptide reads, in one-letter code: Oxygen-dependent coproporphyrinogen-III oxidase (342 aa).

S98 is a substrate binding site. The a divalent metal cation site is built by H102 and H112. H112 (proton donor) is an active-site residue. 114-116 (NYR) contacts substrate. A divalent metal cation contacts are provided by H146 and H176. An important for dimerization region spans residues 266–301 (YVEFNLVWDRGTIFGLQTNGRTESILMSLPPLARWE).

This sequence belongs to the aerobic coproporphyrinogen-III oxidase family. Homodimer. The cofactor is a divalent metal cation.

It is found in the cytoplasm. The catalysed reaction is coproporphyrinogen III + O2 + 2 H(+) = protoporphyrinogen IX + 2 CO2 + 2 H2O. It functions in the pathway porphyrin-containing compound metabolism; protoporphyrin-IX biosynthesis; protoporphyrinogen-IX from coproporphyrinogen-III (O2 route): step 1/1. Functionally, involved in the heme and chlorophyll biosynthesis. Catalyzes the aerobic oxidative decarboxylation of propionate groups of rings A and B of coproporphyrinogen-III to yield the vinyl groups in protoporphyrinogen-IX. The polypeptide is Oxygen-dependent coproporphyrinogen-III oxidase (Prochlorococcus marinus (strain AS9601)).